We begin with the raw amino-acid sequence, 383 residues long: F-box/kelch-repeat protein At2g29830 (383 aa).

Residues 1–21 are disordered; it reads MVVLSEIPGDPNEDNQNENPQ. Positions 11 to 21 are enriched in acidic residues; it reads PNEDNQNENPQ. The F-box domain occupies 27 to 73; it reads LPILLQLPEELIASIVALIPRCHYPSLSLVSRAFRHLITSQELYVAR. Kelch repeat units follow at residues 130-178, 179-224, 226-272, 274-317, and 324-370; these read KMYV…IIDG, RIYV…FITY, VMQG…VVGD, LYAL…YTST, and KLVI…RDLP.

This is F-box/kelch-repeat protein At2g29830 from Arabidopsis thaliana (Mouse-ear cress).